Reading from the N-terminus, the 642-residue chain is Protein INCREASED PETAL GROWTH ANISOTROPY 1 (642 aa).

The disordered stretch occupies residues 1–60 (MVAGKVRVTMGFHKSPSTKKTKDMPSPLPLPPPPPPPLKPPSSGSATTKPPINPSKPGFT). The span at 26–40 (SPLPLPPPPPPPLKP) shows a compositional bias: pro residues. Positions 80–183 (AASHNGVVSE…EAEIVELRKL (104 aa)) form a coiled coil. The tract at residues 223-351 (NLPEPITNQE…PPKSLSIASA (129 aa)) is disordered. The span at 247-256 (DIYRKDEIES) shows a compositional bias: basic and acidic residues. Over residues 258–277 (SRSSNSEELTESSSLSTVRS) the composition is skewed to low complexity. Residues 302–344 (DPPPQKSIPPPPPPPPPPLLQQPPPPPSVSKAPPPPPPPPPPK) are compositionally biased toward pro residues.

The protein belongs to the IPGA1 family. Associates to cortical microtubules via its N-terminal region. Interacts with ANGUSTIFOLIA (AN) on microtubule upon mechanical stress to regulate microtubule organization. Binds to the microtubule-severing enzyme KATANIN (KTN1). Expressed ubiquitously at all development stages, with highest in developing petals. During mechanical stress, accumulates in granules on microtubules.

The protein resides in the cytoplasm. It localises to the cytoskeleton. It is found in the cytosol. The protein localises to the cell membrane. Functionally, microtubule-associated protein involved in the regulation of anisotropic petal and cotyledons growth and shape by affecting cortical microtubule organization. Prevents cortical microtubules organization into parallel arrays oriented perpendicular to the axis of cell elongation thus limiting anisotropic cell growth in the late phases of petal development. Cooperatively with ANGUSTIFOLIA (AN), negatively regulates cortical microtubules (CMTs) organization in response to mechanical stress and modulates pavement cells morphogenesis leading to puzzle shape, probably in an AAA1/KTN1-dependent manner. The sequence is that of Protein INCREASED PETAL GROWTH ANISOTROPY 1 from Arabidopsis thaliana (Mouse-ear cress).